The sequence spans 218 residues: 3,4-dihydroxy-2-butanone 4-phosphate synthase (218 aa).

D-ribulose 5-phosphate contacts are provided by residues 38–39 (RE), aspartate 43, 151–155 (RRGHT), and glutamate 175. Residue glutamate 39 coordinates Mg(2+). Histidine 154 contributes to the Mg(2+) binding site.

It belongs to the DHBP synthase family. In terms of assembly, homodimer. The cofactor is Mg(2+). Requires Mn(2+) as cofactor.

It carries out the reaction D-ribulose 5-phosphate = (2S)-2-hydroxy-3-oxobutyl phosphate + formate + H(+). Its pathway is cofactor biosynthesis; riboflavin biosynthesis; 2-hydroxy-3-oxobutyl phosphate from D-ribulose 5-phosphate: step 1/1. Catalyzes the conversion of D-ribulose 5-phosphate to formate and 3,4-dihydroxy-2-butanone 4-phosphate. This Vibrio cholerae serotype O1 (strain M66-2) protein is 3,4-dihydroxy-2-butanone 4-phosphate synthase.